We begin with the raw amino-acid sequence, 143 residues long: Protein SLC31A2 (143 aa).

Residues 1–22 (MAMHFIFSDTAVLLFDFWSVHS) lie on the Extracellular side of the membrane. The helical transmembrane segment at 23–43 (PAGMALSVLVLLLLAVLYEGI) threads the bilayer. Topologically, residues 44–93 (KVGKAKLLNQVLVNLPTSISQQTIAETDGDSAGSDSFPVGRTHHRWYLCH) are cytoplasmic. Position 77 is a phosphoserine (Ser77). A helical transmembrane segment spans residues 94 to 114 (FGQSLIHVIQVVIGYFIMLAV). At 115-119 (MSYNT) the chain is on the extracellular side. A helical transmembrane segment spans residues 120–140 (WIFLGVVLGSAVGYYLAYPLL). The Cytoplasmic segment spans residues 141 to 143 (STA).

The protein belongs to the copper transporter (Ctr) (TC 1.A.56) family. SLC31A subfamily. As to quaternary structure, oligomer. Interacts with SLC31A1; this interaction stabilizes SLC31A2 and protects it from ubiquitination and the subsequent degradation. In terms of processing, ubiquitinated; ubiquitination and the subsequent proteasomal degradation are prevent by SLC31A1 that stabilizes it. As to expression, ubiquitous with high expression in placenta and heart.

Its subcellular location is the membrane. It localises to the cytoplasmic vesicle membrane. The protein localises to the late endosome membrane. It is found in the lysosome membrane. Its function is as follows. Does not function as a copper(1+) importer in vivo. However, in vitro functions as a low-affinity copper(1+) importer. Regulator of SLC31A1 which facilitates the cleavage of the SLC31A1 ecto-domain or which stabilizes the truncated form of SLC31A1 (Truncated CTR1 form), thereby drives the SLC31A1 truncated form-dependent endosomal copper export and modulates the copper and cisplatin accumulation via SLC31A1. This chain is Protein SLC31A2, found in Homo sapiens (Human).